Reading from the N-terminus, the 384-residue chain is DNA replication and repair protein RecF (384 aa).

43 to 50 is a binding site for ATP; that stretch reads GENGSGKT.

It belongs to the RecF family.

Its subcellular location is the cytoplasm. Its function is as follows. The RecF protein is involved in DNA metabolism; it is required for DNA replication and normal SOS inducibility. RecF binds preferentially to single-stranded, linear DNA. It also seems to bind ATP. This is DNA replication and repair protein RecF from Brucella suis biovar 1 (strain 1330).